A 361-amino-acid polypeptide reads, in one-letter code: 3-isopropylmalate dehydrogenase (361 aa).

78 to 91 is a binding site for NAD(+); it reads GTQWDSLPRHLRPE. Residues arginine 98, arginine 108, arginine 136, and aspartate 226 each contribute to the substrate site. Aspartate 226, aspartate 250, and aspartate 254 together coordinate Mg(2+). 284 to 296 contributes to the NAD(+) binding site; it reads GSAPDIAGQDKAN.

The protein belongs to the isocitrate and isopropylmalate dehydrogenases family. LeuB type 1 subfamily. As to quaternary structure, homodimer. The cofactor is Mg(2+). Mn(2+) serves as cofactor.

The protein resides in the cytoplasm. It catalyses the reaction (2R,3S)-3-isopropylmalate + NAD(+) = 4-methyl-2-oxopentanoate + CO2 + NADH. It functions in the pathway amino-acid biosynthesis; L-leucine biosynthesis; L-leucine from 3-methyl-2-oxobutanoate: step 3/4. Functionally, catalyzes the oxidation of 3-carboxy-2-hydroxy-4-methylpentanoate (3-isopropylmalate) to 3-carboxy-4-methyl-2-oxopentanoate. The product decarboxylates to 4-methyl-2 oxopentanoate. This is 3-isopropylmalate dehydrogenase from Thermosynechococcus vestitus (strain NIES-2133 / IAM M-273 / BP-1).